A 400-amino-acid chain; its full sequence is Unsaturated glucuronyl hydrolase (400 aa).

Positions M1–C20 are cleaved as a signal peptide. D120 (nucleophile) is an active-site residue. D181 (proton donor) is an active-site residue.

It belongs to the glycosyl hydrolase 88 family.

The protein localises to the cell surface. Unsaturated glucuronyl hydrolase involved in ulvan degradation. Ulvan is the main polysaccharide component of the Ulvales (green seaweed) cell wall. It is composed of disaccharide building blocks comprising 3-sulfated rhamnose (Rha3S) linked to D-glucuronic acid (GlcA), L-iduronic acid (IduA), or D-xylose (Xyl). Unsaturated glucuronyl hydrolase catalyzes the cleavage of the unsaturated 4-deoxy-L-threo-hex-4-enopyranosiduronic acid (deltaUA) at the non-reducing end of ulvan oligomers, thus forming 5-dehydro-4-deoxy-D-glucuronate. The polypeptide is Unsaturated glucuronyl hydrolase (Formosa agariphila (strain DSM 15362 / KCTC 12365 / LMG 23005 / KMM 3901 / M-2Alg 35-1)).